A 566-amino-acid chain; its full sequence is MTANVNVLVLPTHMRENDSAAIIIPSTRSAPQKEVSYKHLVAITDSLHRDLAHLGITKACKVAIVLPNGLEFVAVFLSVLRQRAVAAPLDAQLTESEFKDIFSRMKPELVIMLPIPPESSGGPCLPAPAMRAALGLTLRVALCRRTSDVKDGSGLGLQLALDLLEPAHSNHPAVAIVPKASAYSRDDVWSEDGALMLFTSGTTGAPKSVVLSHINLLVAMRIIIANHQLSSMDRTIIITPLHHIIGVCGSLLVTLFSGACAVIPDSLPGAFWQYCTEFGVTWFHAVPTLHRLLLKFPRTKDSMPPRLRFLRSGGSEMAPDLYETLKAFGVPVLEVYGMTETGPAIFCNHLDENGAGARQRSHYPIPDAVDVMILVSSDQPEGETYDKTSLQADQYSNLKMTKEPGVIGEVCVRGKNVMAGYINNSRANTEAFLPNGYFRTGDLGTIQSSGQLKLVGRLKEVINKGGIKIGPSEVEHAALSHESVSEAVCFRIADVMYGEEIGLAVKLRSNSGKNQCTDRDLKQHIRYQLSAFKVPKEIVFVDAVHYNRTGKPLRTQVSQKFAEGLL.

196-207 (MLFTSGTTGAPK) contacts AMP. Residues 473-551 (EVEHAALSHE…DAVHYNRTGK (79 aa)) are AMP-binding.

This sequence belongs to the ATP-dependent AMP-binding enzyme family.

It participates in mycotoxin biosynthesis. Functionally, acyl-CoA synthetase; part of the gene cluster that mediates the biosynthesis of the host-selective toxins (HSTs) AAL-toxins, sphinganine-analog mycotoxins responsible for Alternaria stem canker on tomato by the tomato pathotype. The biosynthesis starts with the polyketide synthase ALT1-catalyzed C-16 carbon chain assembly from one starter acetyl-CoA unit with malonyl-CoA extender units. ALT1 also selectively transfers methyl groups at the first and the third cycle of chain elongation for AAL toxin. The C-16 polyketide chain is released from the enzyme by a nucleophilic attack of a carbanion, which is derived from R-carbon of glycin by decarboxylation, on the carbonyl carbon of polyketide acyl chain. This step is probably catalyzed by a pyridoxal 5'-phosphate-dependent aminoacyl transferase ALT4. The respective functions of the other enzymes encoded by the cluster have still to be elucidated. The sphingosine N-acyltransferase-like protein ALT7 seems not to act as a resistance/self-tolerance factor against the toxin in the toxin biosynthetic gene cluster, contrary to what is expected. This is Acyl-CoA synthetase ALT10 from Alternaria alternata (Alternaria rot fungus).